The sequence spans 664 residues: Transketolase 1 (664 aa).

His26 is a substrate binding site. Residues His66 and Gly114–Leu116 contribute to the thiamine diphosphate site. Residue Asp155 participates in Mg(2+) binding. Positions 156 and 185 each coordinate thiamine diphosphate. 2 residues coordinate Mg(2+): Asn185 and Ile187. His260, Arg357, and Ser384 together coordinate substrate. Residue His260 coordinates thiamine diphosphate. The active-site Proton donor is Glu411. Phe437 serves as a coordination point for thiamine diphosphate. Substrate is bound by residues His461, Asp469, and Arg520.

Belongs to the transketolase family. Homodimer. Mg(2+) is required as a cofactor. It depends on Ca(2+) as a cofactor. Mn(2+) serves as cofactor. The cofactor is Co(2+). Requires thiamine diphosphate as cofactor.

The enzyme catalyses D-sedoheptulose 7-phosphate + D-glyceraldehyde 3-phosphate = aldehydo-D-ribose 5-phosphate + D-xylulose 5-phosphate. Functionally, catalyzes the transfer of a two-carbon ketol group from a ketose donor to an aldose acceptor, via a covalent intermediate with the cofactor thiamine pyrophosphate. The chain is Transketolase 1 (tkt1) from Aliivibrio fischeri (strain ATCC 700601 / ES114) (Vibrio fischeri).